The chain runs to 502 residues: MSQTPGGAPMAPEAMGCHSTADMAAAASAAGNGELMERFKADYPVGPHDKPQSMCPAFGSLRTGLRMRRVGTIISGSACCTYGLSFVSHFYGARRSIGYVPFNSESLVTGKLFEDIREAVHEMADPQRYDAIVVTNLCVPTASGVPLRLLPSEINGVRIVGIDVPGFGVPTHAEAKDVLAGAMLKYARSEIEAGPVQAPVSGRSDRPTVALLGEMFPADPVMIGALLAPLGLAAGPVVPCRDWRELYAALDSGVAAAIHPFYTASVREFQAAGRAIVGSAPVGHDGTAAWLAAIGEAYGIAADKVAAAQNAFLPAIRGALAGAPIKGRITLSGYEGSELIVARLLIESGAEVPYVGTAAGRTPWSAADREWLEARGTVVKFRASLEDDLAAMQGFEPDLAVGTTPVVQKAKSLGIPSLYFTNLISARPLMGPAGAGSLAQVINAAIGNRERMSKMKAFFAGVGEGDTAGIWEGAPNLRPDFRAAHQKKLEKAARAAKSEEMI.

The next 3 helical transmembrane spans lie at 70–87 (VGTIISGSACCTYGLSFV), 131–147 (AIVVTNLCVPTASGVPL), and 221–238 (VMIGALLAPLGLAAGPVV).

Belongs to the BchN/ChlN family. As to quaternary structure, chlorophyllide reductase is composed of three subunits; BchX, BchY and BchZ. Forms a heterodimer of one BchY and one BchZ subunit.

It localises to the cell membrane. It carries out the reaction 3-deacetyl-3-vinylbacteriochlorophyllide a + 2 oxidized [2Fe-2S]-[ferredoxin] + ADP + phosphate = chlorophyllide a + 2 reduced [2Fe-2S]-[ferredoxin] + ATP + H2O + H(+). The enzyme catalyses bacteriochlorophyllide a + 2 oxidized [2Fe-2S]-[ferredoxin] + ADP + phosphate = 3-acetyl-3-devinylchlorophyllide a + 2 reduced [2Fe-2S]-[ferredoxin] + ATP + H2O + H(+). The catalysed reaction is 3-deacetyl-3-(1-hydroxyethyl)bacteriochlorophyllide a + 2 oxidized [2Fe-2S]-[ferredoxin] + ADP + phosphate = 3-devinyl-3-(1-hydroxyethyl)chlorophyllide a + 2 reduced [2Fe-2S]-[ferredoxin] + ATP + H2O + H(+). It functions in the pathway porphyrin-containing compound metabolism; bacteriochlorophyll biosynthesis (light-independent). In terms of biological role, converts chlorophylls (Chl) into bacteriochlorophylls (BChl) by reducing ring B of the tetrapyrrole. This Cereibacter sphaeroides (strain ATCC 17023 / DSM 158 / JCM 6121 / CCUG 31486 / LMG 2827 / NBRC 12203 / NCIMB 8253 / ATH 2.4.1.) (Rhodobacter sphaeroides) protein is Chlorophyllide reductase 52.5 kDa chain (bchY).